Reading from the N-terminus, the 105-residue chain is uncharacterized protein (105 aa).

Residues 25–47 (AHSVTLLFGIFRSSPFLLLFLLI) form a helical membrane-spanning segment. A disordered region spans residues 54–89 (GRGSQRMKKKRGRANPSENLRERADPTNGPAENGKK).

It is found in the membrane. This is an uncharacterized protein from Saccharomyces cerevisiae (strain ATCC 204508 / S288c) (Baker's yeast).